The sequence spans 20 residues: Short cationic peptide-3a (20 aa).

At Glu-20 the chain carries Glutamic acid 1-amide.

Expressed by the venom gland.

The protein localises to the secreted. This Cupiennius salei (American wandering spider) protein is Short cationic peptide-3a.